A 979-amino-acid polypeptide reads, in one-letter code: Translation initiation factor IF-2 (979 aa).

The interval 68-392 is disordered; it reads VKQKQGTPAS…SRAAQDAMEL (325 aa). 3 stretches are compositionally biased toward basic and acidic residues: residues 102-179, 217-229, and 260-273; these read QDMR…KPEE, EMEK…EVFR, and TKED…DADG. Over residues 309–326 the composition is skewed to polar residues; sequence PSGNKNNNRPAQQQSNAS. Positions 347–356 are enriched in basic and acidic residues; sequence DVQRQVKETL. Residues 478-646 form the tr-type G domain; the sequence is ARPPIVTVMG…KVLLEADILE (169 aa). The G1 stretch occupies residues 487 to 494; sequence GHVDHGKT. 487 to 494 contributes to the GTP binding site; it reads GHVDHGKT. The interval 512-516 is G2; that stretch reads GITQH. The segment at 534-537 is G3; sequence DTPG. Residues 534 to 538 and 588 to 591 each bind GTP; these read DTPGH and NKID. Residues 588-591 are G4; the sequence is NKID. The segment at 624 to 626 is G5; sequence SAK.

Belongs to the TRAFAC class translation factor GTPase superfamily. Classic translation factor GTPase family. IF-2 subfamily.

Its subcellular location is the cytoplasm. In terms of biological role, one of the essential components for the initiation of protein synthesis. Protects formylmethionyl-tRNA from spontaneous hydrolysis and promotes its binding to the 30S ribosomal subunits. Also involved in the hydrolysis of GTP during the formation of the 70S ribosomal complex. This Porphyromonas gingivalis (strain ATCC 33277 / DSM 20709 / CIP 103683 / JCM 12257 / NCTC 11834 / 2561) protein is Translation initiation factor IF-2.